The following is a 497-amino-acid chain: Probable cytosol aminopeptidase (497 aa).

The Mn(2+) site is built by K268 and D273. K280 is a catalytic residue. Mn(2+)-binding residues include D291, D350, and E352. R354 is an active-site residue.

This sequence belongs to the peptidase M17 family. It depends on Mn(2+) as a cofactor.

The protein localises to the cytoplasm. It catalyses the reaction Release of an N-terminal amino acid, Xaa-|-Yaa-, in which Xaa is preferably Leu, but may be other amino acids including Pro although not Arg or Lys, and Yaa may be Pro. Amino acid amides and methyl esters are also readily hydrolyzed, but rates on arylamides are exceedingly low.. The catalysed reaction is Release of an N-terminal amino acid, preferentially leucine, but not glutamic or aspartic acids.. Its function is as follows. Presumably involved in the processing and regular turnover of intracellular proteins. Catalyzes the removal of unsubstituted N-terminal amino acids from various peptides. The sequence is that of Probable cytosol aminopeptidase from Alkalilimnicola ehrlichii (strain ATCC BAA-1101 / DSM 17681 / MLHE-1).